A 383-amino-acid polypeptide reads, in one-letter code: Photosynthetic reaction center cytochrome c subunit (383 aa).

The N-terminal stretch at 1–22 (MNLGKQLTLPAVAVVASVVLLG) is a signal peptide. Cys23 carries the N-palmitoyl cysteine lipid modification. Cys23 is lipidated: S-diacylglycerol cysteine. Heme-binding residues include Met94, Cys107, Cys110, His111, Met130, His144, Cys152, Cys155, His156, Met236, Cys247, Cys250, His251, Cys307, Cys310, and His311. Residues 335 to 383 (PAEAAPATEEAPAAEAEAVEAAPVEEAAPAPVEQAAAPVEDAAPAPQQL) are disordered.

In terms of assembly, component of the photosynthetic reaction center composed of protein subunits L (PufL), M (PufM), H (PuhA) and cytochrome C (PufC). The reaction center interacts with light-harvesting antenna complex LH1. Post-translationally, binds 4 heme groups per subunit.

Its subcellular location is the cellular chromatophore membrane. The reaction center of purple bacteria contains a tightly bound cytochrome molecule which re-reduces the photo oxidized primary electron donor. This is Photosynthetic reaction center cytochrome c subunit (pufC) from Allochromatium vinosum (strain ATCC 17899 / DSM 180 / NBRC 103801 / NCIMB 10441 / D) (Chromatium vinosum).